The chain runs to 1129 residues: Inositol hexakisphosphate and diphosphoinositol-pentakisphosphate kinase 2 (1129 aa).

Serine 44 is modified (phosphoserine). Residue 59–60 (KK) participates in substrate binding. 4 residues coordinate ATP: arginine 140, lysine 193, histidine 200, and arginine 219. 219-220 (RK) is a substrate binding site. Serine 229 carries the phosphoserine modification. Residues 243-246 (EEFM) and 252-254 (DVK) contribute to the ATP site. The substrate site is built by lysine 254 and arginine 268. ATP is bound by residues serine 270, aspartate 315, and 327-329 (DVN). 332–335 (SFVK) contributes to the substrate binding site. A polyphosphoinositide-binding domain region spans residues 377-448 (PTTSGTMMEL…VLDIARQLLM (72 aa)). Residues 904–945 (KGCEEDKNLPSGYGYRPASRENEGRRSLKTDDDEPHTSKRDE) form a disordered region. Residues 921-945 (ASRENEGRRSLKTDDDEPHTSKRDE) are compositionally biased toward basic and acidic residues. Phosphoserine occurs at positions 1051, 1058, and 1066. The interval 1070–1129 (YTPTKILPTPPAALKSSKASSKAAAGGPSQAMAPHTSSRKKSINSKTEGHEPKKSTGKKR) is disordered. Residues 1081–1098 (AALKSSKASSKAAAGGPS) are compositionally biased toward low complexity. Phosphoserine is present on residues serine 1106 and serine 1107.

Belongs to the histidine acid phosphatase family. VIP1 subfamily. In terms of tissue distribution, ubiquitously expressed. Expressed in the cochlear and vestibular sensory hair cells, supporting cells and spiral ganglion neurons.

It is found in the cytoplasm. The protein resides in the cytosol. The catalysed reaction is 1D-myo-inositol hexakisphosphate + ATP = 1-diphospho-1D-myo-inositol 2,3,4,5,6-pentakisphosphate + ADP. It catalyses the reaction 5-diphospho-1D-myo-inositol 1,2,3,4,6-pentakisphosphate + ATP + H(+) = 1,5-bis(diphospho)-1D-myo-inositol 2,3,4,6-tetrakisphosphate + ADP. Functionally, bifunctional inositol kinase that acts in concert with the IP6K kinases IP6K1, IP6K2 and IP6K3 to synthesize the diphosphate group-containing inositol pyrophosphates diphosphoinositol pentakisphosphate, PP-InsP5, and bis-diphosphoinositol tetrakisphosphate, (PP)2-InsP4. PP-InsP5 and (PP)2-InsP4, also respectively called InsP7 and InsP8, regulate a variety of cellular processes, including apoptosis, vesicle trafficking, cytoskeletal dynamics, exocytosis, insulin signaling and neutrophil activation. Phosphorylates inositol hexakisphosphate (InsP6) at position 1 to produce PP-InsP5 which is in turn phosphorylated by IP6Ks to produce (PP)2-InsP4. Alternatively, phosphorylates PP-InsP5 at position 1, produced by IP6Ks from InsP6, to produce (PP)2-InsP4. Required for normal hearing. This chain is Inositol hexakisphosphate and diphosphoinositol-pentakisphosphate kinase 2, found in Mus musculus (Mouse).